Reading from the N-terminus, the 236-residue chain is 2-C-methyl-D-erythritol 4-phosphate cytidylyltransferase (236 aa).

Belongs to the IspD/TarI cytidylyltransferase family. IspD subfamily. As to quaternary structure, homodimer.

It catalyses the reaction 2-C-methyl-D-erythritol 4-phosphate + CTP + H(+) = 4-CDP-2-C-methyl-D-erythritol + diphosphate. It participates in isoprenoid biosynthesis; isopentenyl diphosphate biosynthesis via DXP pathway; isopentenyl diphosphate from 1-deoxy-D-xylulose 5-phosphate: step 2/6. Its function is as follows. Catalyzes the formation of 4-diphosphocytidyl-2-C-methyl-D-erythritol from CTP and 2-C-methyl-D-erythritol 4-phosphate (MEP). In Salmonella typhimurium (strain LT2 / SGSC1412 / ATCC 700720), this protein is 2-C-methyl-D-erythritol 4-phosphate cytidylyltransferase.